We begin with the raw amino-acid sequence, 456 residues long: tRNA modification GTPase MnmE (456 aa).

The (6S)-5-formyl-5,6,7,8-tetrahydrofolate site is built by arginine 23, glutamate 80, and lysine 122. One can recognise a TrmE-type G domain in the interval 218–380 (AKRIVIVGPP…LKKHLSNRQK (163 aa)). Residue asparagine 228 participates in K(+) binding. GTP contacts are provided by residues 228–233 (NAGKSS), 247–253 (TDLPGTT), and 272–275 (DTAG). Serine 232 serves as a coordination point for Mg(2+). Threonine 247, leucine 249, and threonine 252 together coordinate K(+). Threonine 253 contacts Mg(2+). A (6S)-5-formyl-5,6,7,8-tetrahydrofolate-binding site is contributed by lysine 456.

This sequence belongs to the TRAFAC class TrmE-Era-EngA-EngB-Septin-like GTPase superfamily. TrmE GTPase family. As to quaternary structure, homodimer. Heterotetramer of two MnmE and two MnmG subunits. It depends on K(+) as a cofactor.

It is found in the cytoplasm. Exhibits a very high intrinsic GTPase hydrolysis rate. Involved in the addition of a carboxymethylaminomethyl (cmnm) group at the wobble position (U34) of certain tRNAs, forming tRNA-cmnm(5)s(2)U34. The protein is tRNA modification GTPase MnmE of Buchnera aphidicola subsp. Schizaphis graminum (strain Sg).